The sequence spans 345 residues: S-adenosylmethionine:tRNA ribosyltransferase-isomerase (345 aa).

The protein belongs to the QueA family. Monomer.

It localises to the cytoplasm. The enzyme catalyses 7-aminomethyl-7-carbaguanosine(34) in tRNA + S-adenosyl-L-methionine = epoxyqueuosine(34) in tRNA + adenine + L-methionine + 2 H(+). The protein operates within tRNA modification; tRNA-queuosine biosynthesis. Its function is as follows. Transfers and isomerizes the ribose moiety from AdoMet to the 7-aminomethyl group of 7-deazaguanine (preQ1-tRNA) to give epoxyqueuosine (oQ-tRNA). This is S-adenosylmethionine:tRNA ribosyltransferase-isomerase from Shewanella oneidensis (strain ATCC 700550 / JCM 31522 / CIP 106686 / LMG 19005 / NCIMB 14063 / MR-1).